A 128-amino-acid chain; its full sequence is Dehydrin Xero 1 (128 aa).

Polar residues predominate over residues 1-19 (MESYQNQSGAQQTHQQLDQ). The tract at residues 1–128 (MESYQNQSGA…IKEKLPGGHH (128 aa)) is disordered. Low complexity-rich tracts occupy residues 23–41 (PFPA…PAVA) and 48–60 (GMLH…SSSS). The span at 75–91 (GITEKIKEKLPGHHDSN) shows a compositional bias: basic and acidic residues. A compositionally biased stretch (polar residues) spans 92-104 (KTSSLGSTTTAYD). The segment covering 107-128 (TVHHEKKGMMEKIKEKLPGGHH) has biased composition (basic and acidic residues).

Belongs to the plant dehydrin family.

The polypeptide is Dehydrin Xero 1 (XERO1) (Arabidopsis thaliana (Mouse-ear cress)).